The primary structure comprises 372 residues: Glutamate 5-kinase (372 aa).

Residue Lys14 participates in ATP binding. Substrate is bound by residues Ser54, Asp141, and Asn153. 173–174 (TD) provides a ligand contact to ATP. Residues 280 to 358 (RGRVVIDAGA…SEIESVLGHL (79 aa)) enclose the PUA domain.

The protein belongs to the glutamate 5-kinase family.

Its subcellular location is the cytoplasm. The catalysed reaction is L-glutamate + ATP = L-glutamyl 5-phosphate + ADP. It functions in the pathway amino-acid biosynthesis; L-proline biosynthesis; L-glutamate 5-semialdehyde from L-glutamate: step 1/2. In terms of biological role, catalyzes the transfer of a phosphate group to glutamate to form L-glutamate 5-phosphate. In Cupriavidus pinatubonensis (strain JMP 134 / LMG 1197) (Cupriavidus necator (strain JMP 134)), this protein is Glutamate 5-kinase.